The primary structure comprises 400 residues: Nicotinate phosphoribosyltransferase (400 aa).

The residue at position 220 (His220) is a Phosphohistidine; by autocatalysis.

The protein belongs to the NAPRTase family. Transiently phosphorylated on a His residue during the reaction cycle. Phosphorylation strongly increases the affinity for substrates and increases the rate of nicotinate D-ribonucleotide production. Dephosphorylation regenerates the low-affinity form of the enzyme, leading to product release.

It catalyses the reaction nicotinate + 5-phospho-alpha-D-ribose 1-diphosphate + ATP + H2O = nicotinate beta-D-ribonucleotide + ADP + phosphate + diphosphate. The protein operates within cofactor biosynthesis; NAD(+) biosynthesis; nicotinate D-ribonucleotide from nicotinate: step 1/1. In terms of biological role, catalyzes the synthesis of beta-nicotinate D-ribonucleotide from nicotinate and 5-phospho-D-ribose 1-phosphate at the expense of ATP. This is Nicotinate phosphoribosyltransferase from Salmonella agona (strain SL483).